The sequence spans 504 residues: MSKQDGKLTGLFGAPVSDRENSMTAGQRGPLLMQDVYYLEQISHFDREVIPERRMHAKGSGAFGTFTVTNDITQYTNAKIFSEVGKQTEMFARFSTVSGERGAADLERDIRGFALKFYTEDGNWDLVGNNTPVFFFRDPKLFISLNRAVKRDPRTNMRSAQNNWDFWTGLPEALHQVTILMSDRGMPKGFRNMHGFGSHTYSMYNDKGERVWVKYHFRTQQGIENYTDEEAAKIVGMDRDSSQRDLYNAIENGDYPKWKMYIQVMTEEQAKNHPDNPFDLTKVWYKKDYPLIEVGEFELNRNPENYFLDVEQAAFTPTNIVPGLDYSPDKMLQGRLFSYGDAQRYRLGVNHWQIPVNQPKGVGVENLCPFSRDGQMRFLDNNQGGGPHYYPNNQGIYESQPEHKKPPFPTDGDGYEYNYRQDDDNYFEQPGKLFRLQSEDAKERIFTNTANAMDGVSKDVKVRHIRHCYKADPEYGKGVAKALGIDINQIDLETNQDETYENFK.

The interval 1 to 25 (MSKQDGKLTGLFGAPVSDRENSMTA) is disordered. Active-site residues include His56 and Asn129. Tyr339 provides a ligand contact to heme.

This sequence belongs to the catalase family. In terms of assembly, homodimer. Heme is required as a cofactor.

The enzyme catalyses 2 H2O2 = O2 + 2 H2O. Functionally, decomposes hydrogen peroxide into water and oxygen; serves to protect cells from the toxic effects of hydrogen peroxide. The chain is Catalase (katA) from Staphylococcus epidermidis (strain ATCC 35984 / DSM 28319 / BCRC 17069 / CCUG 31568 / BM 3577 / RP62A).